The sequence spans 542 residues: Cytochrome P450 79B1 (542 aa).

Residues 21–41 (FSNMYLLTTLQAFVAITLVML) traverse the membrane as a helical segment. Cys-478 serves as a coordination point for heme.

It belongs to the cytochrome P450 family. The cofactor is heme.

Its subcellular location is the membrane. Its function is as follows. Converts tyrosine to para-hydrophenylacetaldoxime in para-hydroxybenzylglucosinolate biosynthesis. In Sinapis alba (White mustard), this protein is Cytochrome P450 79B1 (CYP79B1).